A 144-amino-acid chain; its full sequence is Maximins 7/H1 (144 aa).

A signal peptide spans 1–18; it reads MNFKYIVAVSFLIASAYA. Residues 19-43 constitute a propeptide that is removed on maturation; sequence RSEENDEQSLSQRDVLEEESLREIR. Position 70 is an asparagine amide (Asn70). The propeptide occupies 74–123; sequence TAEDHEVMKRLEAVMRDLDSLDYPEEAAERETRGFNQEEIANLFTKKEKR. Leu143 is subject to Leucine amide.

Belongs to the bombinin family. As to expression, expressed by the skin glands.

It localises to the secreted. Functionally, maximin-7 shows antimicrobial activity against bacteria and against the fungus C.albicans. It has little hemolytic activity. Its function is as follows. Maximin-H1 shows antibacterial activity against both Gram-positive and Gram-negative bacteria. It also shows antimicrobial activity against the fungus C.albicans. Shows strong hemolytic activity. The protein is Maximins 7/H1 of Bombina maxima (Giant fire-bellied toad).